We begin with the raw amino-acid sequence, 184 residues long: Large ribosomal subunit protein uL5 (184 aa).

It belongs to the universal ribosomal protein uL5 family. Part of the 50S ribosomal subunit; part of the 5S rRNA/L5/L18/L25 subcomplex. Contacts the 5S rRNA and the P site tRNA. Forms a bridge to the 30S subunit in the 70S ribosome.

Functionally, this is one of the proteins that bind and probably mediate the attachment of the 5S RNA into the large ribosomal subunit, where it forms part of the central protuberance. In the 70S ribosome it contacts protein S13 of the 30S subunit (bridge B1b), connecting the 2 subunits; this bridge is implicated in subunit movement. Contacts the P site tRNA; the 5S rRNA and some of its associated proteins might help stabilize positioning of ribosome-bound tRNAs. In Thermotoga maritima (strain ATCC 43589 / DSM 3109 / JCM 10099 / NBRC 100826 / MSB8), this protein is Large ribosomal subunit protein uL5.